Here is a 501-residue protein sequence, read N- to C-terminus: Cobyric acid synthase (501 aa).

The region spanning 252-443 is the GATase cobBQ-type domain; that stretch reads DLDVAVIDLD…LHGIFDNPYW (192 aa). The Nucleophile role is filled by cysteine 333. Histidine 435 is an active-site residue.

The protein belongs to the CobB/CobQ family. CobQ subfamily.

The protein operates within cofactor biosynthesis; adenosylcobalamin biosynthesis. Its function is as follows. Catalyzes amidations at positions B, D, E, and G on adenosylcobyrinic A,C-diamide. NH(2) groups are provided by glutamine, and one molecule of ATP is hydrogenolyzed for each amidation. This Limosilactobacillus reuteri (strain DSM 20016) (Lactobacillus reuteri) protein is Cobyric acid synthase.